The chain runs to 330 residues: Beta-ketoacyl-[acyl-carrier-protein] synthase III (330 aa).

Active-site residues include cysteine 114 and histidine 255. An ACP-binding region spans residues 256 to 260 (QANQR). Asparagine 285 is an active-site residue.

This sequence belongs to the thiolase-like superfamily. FabH family. Homodimer.

It localises to the cytoplasm. The enzyme catalyses malonyl-[ACP] + acetyl-CoA + H(+) = 3-oxobutanoyl-[ACP] + CO2 + CoA. It participates in lipid metabolism; fatty acid biosynthesis. Its function is as follows. Catalyzes the condensation reaction of fatty acid synthesis by the addition to an acyl acceptor of two carbons from malonyl-ACP. Catalyzes the first condensation reaction which initiates fatty acid synthesis and may therefore play a role in governing the total rate of fatty acid production. Possesses both acetoacetyl-ACP synthase and acetyl transacylase activities. Its substrate specificity determines the biosynthesis of branched-chain and/or straight-chain of fatty acids. The sequence is that of Beta-ketoacyl-[acyl-carrier-protein] synthase III from Nostoc sp. (strain PCC 7120 / SAG 25.82 / UTEX 2576).